Consider the following 120-residue polypeptide: uncharacterized protein (120 aa).

Its subcellular location is the virion. This is an uncharacterized protein from Acanthamoeba polyphaga mimivirus (APMV).